We begin with the raw amino-acid sequence, 134 residues long: Large ribosomal subunit protein uL16c (134 aa).

This sequence belongs to the universal ribosomal protein uL16 family. As to quaternary structure, part of the 50S ribosomal subunit.

It is found in the plastid. The protein localises to the chloroplast. The protein is Large ribosomal subunit protein uL16c of Pinus koraiensis (Korean pine).